Reading from the N-terminus, the 259-residue chain is UPF0246 protein Rfer_2372 (259 aa).

This sequence belongs to the UPF0246 family.

The protein is UPF0246 protein Rfer_2372 of Albidiferax ferrireducens (strain ATCC BAA-621 / DSM 15236 / T118) (Rhodoferax ferrireducens).